The following is a 192-amino-acid chain: Probable nicotinate-nucleotide adenylyltransferase (192 aa).

Belongs to the NadD family.

It carries out the reaction nicotinate beta-D-ribonucleotide + ATP + H(+) = deamido-NAD(+) + diphosphate. It functions in the pathway cofactor biosynthesis; NAD(+) biosynthesis; deamido-NAD(+) from nicotinate D-ribonucleotide: step 1/1. In terms of biological role, catalyzes the reversible adenylation of nicotinate mononucleotide (NaMN) to nicotinic acid adenine dinucleotide (NaAD). The protein is Probable nicotinate-nucleotide adenylyltransferase of Rhizobium leguminosarum bv. trifolii (strain WSM2304).